The primary structure comprises 346 residues: Large ribosomal subunit protein uL3 (346 aa).

The tract at residues 324–346 (KPPKKKPPVERPQITYVSRESKQ) is disordered.

Belongs to the universal ribosomal protein uL3 family. As to quaternary structure, part of the 50S ribosomal subunit. Forms a cluster with proteins L14 and L24e.

One of the primary rRNA binding proteins, it binds directly near the 3'-end of the 23S rRNA, where it nucleates assembly of the 50S subunit. This is Large ribosomal subunit protein uL3 from Thermococcus gammatolerans (strain DSM 15229 / JCM 11827 / EJ3).